A 346-amino-acid chain; its full sequence is MNLHGKSVILHDMSLRDGMHAKRHQISLEQMVAVATGLDQAGMPLIEITHGDGLGGRSINYGFPAHSDEEYLRAVIPQLKQAKVSALLLPGIGTVDHLKMALDCGVSTIRVATHCTEADVSEQHIGMARKLGVDTVGFLMMAHMISAEKVLEQAKLMESYGANCIYCTDSAGYMLPDEVSEKIGLLRAELNPATEVGFHGHHNMGMAIANSLAAIEAGAARIDGSVAGLGAGAGNTPLEVFVAVCKRMGVETGIDLYKIMDVAEDLVVPMMDQPIRVDRDALTLGYAGVYSSFLLFAQRAEKKYGVSARDILVELGRRGTVGGQEDMIEDLALDMARARQQQKVSA.

Positions 8–260 constitute a Pyruvate carboxyltransferase domain; it reads VILHDMSLRD…ETGIDLYKIM (253 aa). 16–17 provides a ligand contact to substrate; that stretch reads RD. A Mn(2+)-binding site is contributed by D17. The active-site Proton acceptor is the H20. Substrate-binding residues include S170 and H199. Mn(2+) is bound by residues H199 and H201. Position 290 (Y290) interacts with substrate.

Belongs to the 4-hydroxy-2-oxovalerate aldolase family.

It catalyses the reaction (S)-4-hydroxy-2-oxopentanoate = acetaldehyde + pyruvate. Its pathway is aromatic compound metabolism; naphthalene degradation. The chain is 4-hydroxy-2-oxovalerate aldolase (nahM) from Pseudomonas putida (Arthrobacter siderocapsulatus).